The primary structure comprises 508 residues: 2,3-bisphosphoglycerate-independent phosphoglycerate mutase (508 aa).

The Mn(2+) site is built by Asp11 and Ser61. The active-site Phosphoserine intermediate is Ser61. Substrate contacts are provided by residues His122, 150 to 151 (RD), Arg182, Arg188, 257 to 260 (RPDR), and Lys332. 5 residues coordinate Mn(2+): Asp397, His401, Asp438, His439, and His456.

It belongs to the BPG-independent phosphoglycerate mutase family. Monomer. Requires Mn(2+) as cofactor.

The enzyme catalyses (2R)-2-phosphoglycerate = (2R)-3-phosphoglycerate. Its pathway is carbohydrate degradation; glycolysis; pyruvate from D-glyceraldehyde 3-phosphate: step 3/5. Functionally, catalyzes the interconversion of 2-phosphoglycerate and 3-phosphoglycerate. The polypeptide is 2,3-bisphosphoglycerate-independent phosphoglycerate mutase (Mycoplasma pneumoniae (strain ATCC 29342 / M129 / Subtype 1) (Mycoplasmoides pneumoniae)).